The primary structure comprises 470 residues: ATP synthase subunit beta (470 aa).

An ATP-binding site is contributed by 157 to 164 (GGAGVGKT).

It belongs to the ATPase alpha/beta chains family. As to quaternary structure, F-type ATPases have 2 components, CF(1) - the catalytic core - and CF(0) - the membrane proton channel. CF(1) has five subunits: alpha(3), beta(3), gamma(1), delta(1), epsilon(1). CF(0) has three main subunits: a(1), b(2) and c(9-12). The alpha and beta chains form an alternating ring which encloses part of the gamma chain. CF(1) is attached to CF(0) by a central stalk formed by the gamma and epsilon chains, while a peripheral stalk is formed by the delta and b chains.

Its subcellular location is the cell inner membrane. It catalyses the reaction ATP + H2O + 4 H(+)(in) = ADP + phosphate + 5 H(+)(out). Functionally, produces ATP from ADP in the presence of a proton gradient across the membrane. The catalytic sites are hosted primarily by the beta subunits. In Citrifermentans bemidjiense (strain ATCC BAA-1014 / DSM 16622 / JCM 12645 / Bem) (Geobacter bemidjiensis), this protein is ATP synthase subunit beta.